A 156-amino-acid chain; its full sequence is Small ribosomal subunit protein uS7 (156 aa).

It belongs to the universal ribosomal protein uS7 family. As to quaternary structure, part of the 30S ribosomal subunit. Contacts proteins S9 and S11.

In terms of biological role, one of the primary rRNA binding proteins, it binds directly to 16S rRNA where it nucleates assembly of the head domain of the 30S subunit. Is located at the subunit interface close to the decoding center, probably blocks exit of the E-site tRNA. The protein is Small ribosomal subunit protein uS7 of Rhizobium leguminosarum bv. trifolii (strain WSM2304).